A 244-amino-acid chain; its full sequence is Small ribosomal subunit protein uS3 (244 aa).

Positions 39-107 constitute a KH type-2 domain; the sequence is VREMLRKKLA…PAHINVTEVR (69 aa). Residues 213-244 form a disordered region; it reads VGQEKQDDSPRNDRNDRGDRGDRPSRPAREAR. A compositionally biased stretch (basic and acidic residues) spans 216-244; the sequence is EKQDDSPRNDRNDRGDRGDRPSRPAREAR.

This sequence belongs to the universal ribosomal protein uS3 family. As to quaternary structure, part of the 30S ribosomal subunit. Forms a tight complex with proteins S10 and S14.

Functionally, binds the lower part of the 30S subunit head. Binds mRNA in the 70S ribosome, positioning it for translation. The protein is Small ribosomal subunit protein uS3 of Xanthomonas euvesicatoria pv. vesicatoria (strain 85-10) (Xanthomonas campestris pv. vesicatoria).